A 186-amino-acid polypeptide reads, in one-letter code: Ribosome-recycling factor (186 aa).

The disordered stretch occupies residues 135 to 156 (DANDEVKKLQKDKAVSEDEGKK).

Belongs to the RRF family.

The protein resides in the cytoplasm. Its function is as follows. Responsible for the release of ribosomes from messenger RNA at the termination of protein biosynthesis. May increase the efficiency of translation by recycling ribosomes from one round of translation to another. The sequence is that of Ribosome-recycling factor from Bdellovibrio bacteriovorus (strain ATCC 15356 / DSM 50701 / NCIMB 9529 / HD100).